The sequence spans 229 residues: Putative ankyrin repeat protein L148 (229 aa).

ANK repeat units lie at residues 70–95 (ILDY…PDNY), 96–126 (IGTE…DLRI), 127–156 (NNDY…NCQA), and 157–186 (YNNA…SVAA).

The sequence is that of Putative ankyrin repeat protein L148 from Acanthamoeba polyphaga (Amoeba).